Reading from the N-terminus, the 734-residue chain is Ribosome-releasing factor 2, mitochondrial (734 aa).

A mitochondrion-targeting transit peptide spans 1–25 (MLQYCLLRRYRFLLRQHAQVIKRCY). Residues 27–303 (GDIRNIGILA…AVNAYLPMPE (277 aa)) form the tr-type G domain. GTP is bound by residues 36–43 (AHIDAGKT), 100–104 (DTPGH), and 154–157 (NKMD).

This sequence belongs to the TRAFAC class translation factor GTPase superfamily. Classic translation factor GTPase family. EF-G/EF-2 subfamily.

The protein resides in the mitochondrion. In terms of biological role, mitochondrial GTPase that mediates the disassembly of ribosomes from messenger RNA at the termination of mitochondrial protein biosynthesis. Not involved in the GTP-dependent ribosomal translocation step during translation elongation. The protein is Ribosome-releasing factor 2, mitochondrial of Drosophila grimshawi (Hawaiian fruit fly).